The primary structure comprises 486 residues: Protein nucleotidyltransferase YdiU (486 aa).

ATP is bound by residues G90, G92, R93, K113, D125, G126, R176, and R183. D252 acts as the Proton acceptor in catalysis. N253 and D262 together coordinate Mg(2+). D262 is a binding site for ATP.

Belongs to the SELO family. The cofactor is Mg(2+). Mn(2+) is required as a cofactor.

The catalysed reaction is L-seryl-[protein] + ATP = 3-O-(5'-adenylyl)-L-seryl-[protein] + diphosphate. It catalyses the reaction L-threonyl-[protein] + ATP = 3-O-(5'-adenylyl)-L-threonyl-[protein] + diphosphate. It carries out the reaction L-tyrosyl-[protein] + ATP = O-(5'-adenylyl)-L-tyrosyl-[protein] + diphosphate. The enzyme catalyses L-histidyl-[protein] + UTP = N(tele)-(5'-uridylyl)-L-histidyl-[protein] + diphosphate. The catalysed reaction is L-seryl-[protein] + UTP = O-(5'-uridylyl)-L-seryl-[protein] + diphosphate. It catalyses the reaction L-tyrosyl-[protein] + UTP = O-(5'-uridylyl)-L-tyrosyl-[protein] + diphosphate. Its function is as follows. Nucleotidyltransferase involved in the post-translational modification of proteins. It can catalyze the addition of adenosine monophosphate (AMP) or uridine monophosphate (UMP) to a protein, resulting in modifications known as AMPylation and UMPylation. The polypeptide is Protein nucleotidyltransferase YdiU (Pseudomonas putida (strain W619)).